A 113-amino-acid chain; its full sequence is UPF0342 protein SPy_0811/M5005_Spy0626 (113 aa).

This sequence belongs to the UPF0342 family.

This chain is UPF0342 protein SPy_0811/M5005_Spy0626, found in Streptococcus pyogenes serotype M1.